An 864-amino-acid chain; its full sequence is Seed linoleate 9S-lipoxygenase-2 (864 aa).

The PLAT domain maps to 46-171 (SGINIIGSTL…LYKSPRIFFA (126 aa)). Positions 174 to 864 (SYLPSETPSP…FRGIPNSISI (691 aa)) constitute a Lipoxygenase domain. The tract at residues 230-264 (PILGGSSTHPYPRRGRTGRYPTRKDPNSEKPATET) is disordered. Over residues 251 to 264 (TRKDPNSEKPATET) the composition is skewed to basic and acidic residues. Fe cation contacts are provided by His-524, His-529, His-716, Asn-720, and Ile-864.

It belongs to the lipoxygenase family. Requires Fe cation as cofactor.

It localises to the cytoplasm. It catalyses the reaction (9Z,12Z)-octadecadienoate + O2 = (9S)-hydroperoxy-(10E,12Z)-octadecadienoate. The protein operates within lipid metabolism; oxylipin biosynthesis. Functionally, plant lipoxygenase may be involved in a number of diverse aspects of plant physiology including growth and development, pest resistance, and senescence or responses to wounding. It catalyzes the hydroperoxidation of lipids containing a cis,cis-1,4-pentadiene structure. The polypeptide is Seed linoleate 9S-lipoxygenase-2 (LOX1.2) (Pisum sativum (Garden pea)).